A 455-amino-acid chain; its full sequence is Glutamate-1-semialdehyde 2,1-aminomutase (455 aa).

Lysine 286 bears the N6-(pyridoxal phosphate)lysine mark.

It belongs to the class-III pyridoxal-phosphate-dependent aminotransferase family. HemL subfamily. As to quaternary structure, homodimer. Pyridoxal 5'-phosphate serves as cofactor.

The protein resides in the cytoplasm. The catalysed reaction is (S)-4-amino-5-oxopentanoate = 5-aminolevulinate. It functions in the pathway porphyrin-containing compound metabolism; protoporphyrin-IX biosynthesis; 5-aminolevulinate from L-glutamyl-tRNA(Glu): step 2/2. In Clavibacter michiganensis subsp. michiganensis (strain NCPPB 382), this protein is Glutamate-1-semialdehyde 2,1-aminomutase.